The primary structure comprises 297 residues: Calponin-1 (297 aa).

Residues 28–131 (HQREQELREW…STLLALASMA (104 aa)) enclose the Calponin-homology (CH) domain. Calponin-like repeat units lie at residues 164–189 (IGLQ…RHLY), 204–229 (ISLQ…RQIF), and 243–268 (VSLQ…RQVY). Thr-170 carries the post-translational modification Phosphothreonine; by ROCK2. Phosphoserine; by ROCK2 is present on Ser-175. Residues Thr-180 and Thr-184 each carry the phosphothreonine; by ROCK2 modification. Thr-259 is modified (phosphothreonine; by ROCK2).

Belongs to the calponin family. As to quaternary structure, part of cGMP kinase signaling complex at least composed of ACTA2/alpha-actin, CNN1/calponin H1, PLN/phospholamban, PRKG1 and ITPR1.

Functionally, thin filament-associated protein that is implicated in the regulation and modulation of smooth muscle contraction. It is capable of binding to actin, calmodulin and tropomyosin. The interaction of calponin with actin inhibits the actomyosin Mg-ATPase activity. This Ovis aries (Sheep) protein is Calponin-1 (CNN1).